The chain runs to 103 residues: Large ribosomal subunit protein bL21 (103 aa).

The protein belongs to the bacterial ribosomal protein bL21 family. As to quaternary structure, part of the 50S ribosomal subunit. Contacts protein L20.

This protein binds to 23S rRNA in the presence of protein L20. The protein is Large ribosomal subunit protein bL21 of Yersinia enterocolitica serotype O:8 / biotype 1B (strain NCTC 13174 / 8081).